The sequence spans 319 residues: Mercury resistance probable Hg transport protein (319 aa).

Hg(2+) contacts are provided by cysteine 298, cysteine 299, cysteine 318, and cysteine 319.

The chain is Mercury resistance probable Hg transport protein from Streptomyces lividans.